Reading from the N-terminus, the 118-residue chain is MKKQNLVSFSDNLEAMRKFSETYAKRTGTFFCADNSVTAVVIEGLARHKDKYGAPLCPCRHYEDKKAEISATYWNCPCVPMRERKECHCMLFLTPDNEFTSDLQEIDKTTLLEKIASS.

Residue Cys-57 participates in [4Fe-4S] cluster binding. Cys-59 serves as the catalytic Nucleophile. Cysteines 59 and 89 form a disulfide. Residues Cys-76, Cys-78, and Cys-87 each contribute to the [4Fe-4S] cluster site.

It belongs to the ferredoxin thioredoxin reductase beta subunit family. In terms of assembly, heterodimer of subunit A (variable subunit) and subunit B (catalytic subunit). Heterodimeric FTR forms a complex with ferredoxin and thioredoxin. [4Fe-4S] cluster is required as a cofactor.

It localises to the plastid. The protein localises to the chloroplast. It catalyses the reaction [thioredoxin]-disulfide + 2 reduced [2Fe-2S]-[ferredoxin] + 2 H(+) = [thioredoxin]-dithiol + 2 oxidized [2Fe-2S]-[ferredoxin]. Functionally, catalytic subunit of the ferredoxin-thioredoxin reductase (FTR), which catalyzes the two-electron reduction of thioredoxins by the electrons provided by reduced ferredoxin. The protein is Ferredoxin-thioredoxin reductase, catalytic chain (ftrB) of Porphyra purpurea (Red seaweed).